A 257-amino-acid polypeptide reads, in one-letter code: Exosome complex component Rrp4 (257 aa).

In terms of domain architecture, S1 motif spans glycine 65–lysine 137. In terms of domain architecture, KH spans arginine 147 to isoleucine 206.

The protein belongs to the RRP4 family. As to quaternary structure, component of the archaeal exosome complex. Forms a trimer of Rrp4 and/or Csl4 subunits. The trimer associates with a hexameric ring-like arrangement composed of 3 Rrp41-Rrp42 heterodimers.

The protein localises to the cytoplasm. In terms of biological role, non-catalytic component of the exosome, which is a complex involved in RNA degradation. Increases the RNA binding and the efficiency of RNA degradation. Confers strong poly(A) specificity to the exosome. In Thermococcus kodakarensis (strain ATCC BAA-918 / JCM 12380 / KOD1) (Pyrococcus kodakaraensis (strain KOD1)), this protein is Exosome complex component Rrp4.